Here is a 206-residue protein sequence, read N- to C-terminus: Uridine kinase (206 aa).

Residue 11-18 coordinates ATP; sequence GGTGSGKS.

The protein belongs to the uridine kinase family.

It localises to the cytoplasm. It catalyses the reaction uridine + ATP = UMP + ADP + H(+). The catalysed reaction is cytidine + ATP = CMP + ADP + H(+). It participates in pyrimidine metabolism; CTP biosynthesis via salvage pathway; CTP from cytidine: step 1/3. It functions in the pathway pyrimidine metabolism; UMP biosynthesis via salvage pathway; UMP from uridine: step 1/1. This chain is Uridine kinase, found in Clostridium botulinum (strain Kyoto / Type A2).